A 296-amino-acid chain; its full sequence is Arginase (296 aa).

Mn(2+)-binding residues include His-98, Asp-124, His-126, and Asp-128. L-arginine is bound by residues Asn-130, Ser-137, and Asp-178. 2 residues coordinate Mn(2+): Asp-225 and Asp-227. Asp-227 and Thr-239 together coordinate L-arginine.

Belongs to the arginase family. In terms of assembly, monomer. Homodimer; dimerization is dispensable for catalytic activity. Requires Mn(2+) as cofactor.

The enzyme catalyses L-arginine + H2O = urea + L-ornithine. The protein operates within nitrogen metabolism; urea cycle; L-ornithine and urea from L-arginine: step 1/1. Substitution of the loosely bound surface exposed Mn(2+) with Mg(2+), Zn(2+), Ni(2+) or Co(2+) results in similar catalytic activity, substitution with Cd(2+) and Cu(2+) reduces catalytic activity and substitution with Hg(2+) and Ca(2+) inhibits the enzyme. Inhibited by L-norvaline. Catalyzes the hydrolysis of L-arginine into urea and L-ornithine, which is a precursor for polyamine biosynthesis. By depleting host L-arginine, a substrate for nitric oxide synthase (NOS), prevents the production of nitric oxide (NO) by host activated macrophages, and thus allows the parasite to evade host immune response. In Entamoeba histolytica (strain ATCC 30459 / HM-1:IMSS / ABRM), this protein is Arginase.